Consider the following 417-residue polypeptide: Phosphoglycerate kinase 1 (417 aa).

Serine 2 carries the N-acetylserine modification. 2 positions are modified to phosphoserine: serine 2 and serine 4. N6-succinyllysine is present on lysine 6. N6-acetyllysine is present on lysine 11. (2R)-3-phosphoglycerate-binding residues include valine 23, aspartate 24, phenylalanine 25, asparagine 26, glutamine 38, and arginine 39. The segment at 38–43 (QRIKAA) is mitochondrial targeting region exposed following cis-trans isomerization by PIN1 and recognized by the TOM complex for mitochondrial translocation of the protein. The residue at position 48 (lysine 48) is an N6-acetyllysine; alternate. Position 48 is an N6-succinyllysine; alternate (lysine 48). (2R)-3-phosphoglycerate is bound by residues serine 62, histidine 63, glycine 65, and arginine 66. Lysine 75 carries the post-translational modification N6-acetyllysine. Tyrosine 76 is modified (phosphotyrosine). Lysine 86 and lysine 91 each carry N6-acetyllysine. N6-acetyllysine; alternate is present on lysine 97. Lysine 97 carries the N6-(2-hydroxyisobutyryl)lysine; alternate modification. Residues leucine 122 and arginine 123 each contribute to the (2R)-3-phosphoglycerate site. Lysine 131 carries the N6-acetyllysine; alternate modification. Residue lysine 131 is modified to N6-malonyllysine; alternate. N6-acetyllysine is present on lysine 146. Residues histidine 170 and arginine 171 each contribute to the (2R)-3-phosphoglycerate site. Lysine 191 carries the post-translational modification N6-succinyllysine. Tyrosine 196 carries the phosphotyrosine modification. At lysine 199 the chain carries N6-acetyllysine. At serine 203 the chain carries Phosphoserine. Residue glycine 214 participates in ADP binding. Glycine 214 lines the CDP pocket. AMP is bound by residues alanine 215 and lysine 216. Alanine 215 provides a ligand contact to ATP. A Mg(2+)-binding site is contributed by alanine 215. Lysine 216 is modified (N6-(2-hydroxyisobutyryl)lysine). Mg(2+)-binding residues include alanine 218 and aspartate 219. Residue aspartate 219 participates in CDP binding. Lysine 220 is an AMP binding site. An ATP-binding site is contributed by lysine 220. Position 220 is an N6-(2-hydroxyisobutyryl)lysine (lysine 220). Glycine 238 serves as a coordination point for ADP. Position 238 (glycine 238) interacts with CDP. Glycine 239 contacts AMP. Glycine 239 lines the ATP pocket. N6-acetyllysine is present on residues lysine 267 and lysine 291. AMP is bound at residue glycine 313. Glycine 313 lines the ATP pocket. Position 323 is an N6-(2-hydroxyisobutyryl)lysine (lysine 323). 3 residues coordinate CDP: glycine 338, valine 340, and phenylalanine 343. Phenylalanine 343 contacts ADP. Position 344 (glutamate 344) interacts with AMP. Glutamate 344 is a binding site for ATP. Lysine 361 carries the N6-acetyllysine modification. Residues aspartate 375 and threonine 376 each coordinate ATP. Residue aspartate 375 participates in Mg(2+) binding.

The protein belongs to the phosphoglycerate kinase family. Monomer. Interacts with kinase MAPK1/ERK2; the interaction is direct, occurs under hypoxic conditions, and promotes its interaction with PIN1. Interacts with peptidyl-prolyl cis-trans isomerase PIN1; the interaction is direct, occurs under hypoxic conditions, and targets the protein to the mitochondrion by promoting interactions with the TOM complex. Interacts with mitochondrial circRNA mcPGK1 (via its 2nd stem-loop); the interaction is direct and targets the protein to the mitochondrion by promoting interactions with the TOM complex. Interacts with pyruvate dehydrogenase kinase PDK1; the interaction is direct, occurs under hypoxic conditions and leads to PDK1-mediated inhibition of pyruvate dehydrogenase complex activity. It depends on Mg(2+) as a cofactor. Phosphorylated at Ser-203 by MAPK1/ERK2 under hypoxic conditions, which promotes its mitochondrial targeting.

Its subcellular location is the cytoplasm. It is found in the cytosol. The protein localises to the mitochondrion matrix. It catalyses the reaction (2R)-3-phosphoglycerate + ATP = (2R)-3-phospho-glyceroyl phosphate + ADP. The enzyme catalyses L-seryl-[protein] + ATP = O-phospho-L-seryl-[protein] + ADP + H(+). It participates in carbohydrate degradation; glycolysis; pyruvate from D-glyceraldehyde 3-phosphate: step 2/5. Functionally, catalyzes one of the two ATP producing reactions in the glycolytic pathway via the reversible conversion of 1,3-diphosphoglycerate to 3-phosphoglycerate. Both L- and D- forms of purine and pyrimidine nucleotides can be used as substrates, but the activity is much lower on pyrimidines. In addition to its role as a glycolytic enzyme, it seems that PGK-1 acts as a polymerase alpha cofactor protein (primer recognition protein). Acts as a protein kinase when localized to the mitochondrion where it phosphorylates pyruvate dehydrogenase kinase PDK1 to inhibit pyruvate dehydrogenase complex activity and suppress the formation of acetyl-coenzyme A from pyruvate, and consequently inhibit oxidative phosphorylation and promote glycolysis. May play a role in sperm motility. The chain is Phosphoglycerate kinase 1 (PGK1) from Cricetulus griseus (Chinese hamster).